A 444-amino-acid chain; its full sequence is Phosphoglucosamine mutase (444 aa).

Serine 103 (phosphoserine intermediate) is an active-site residue. Residues serine 103, aspartate 242, aspartate 244, and aspartate 246 each coordinate Mg(2+). Position 103 is a phosphoserine (serine 103).

Belongs to the phosphohexose mutase family. Requires Mg(2+) as cofactor. Post-translationally, activated by phosphorylation.

The catalysed reaction is alpha-D-glucosamine 1-phosphate = D-glucosamine 6-phosphate. Functionally, catalyzes the conversion of glucosamine-6-phosphate to glucosamine-1-phosphate. This chain is Phosphoglucosamine mutase, found in Hydrogenovibrio crunogenus (strain DSM 25203 / XCL-2) (Thiomicrospira crunogena).